Here is a 370-residue protein sequence, read N- to C-terminus: tRNA pseudouridine synthase D (370 aa).

Catalysis depends on Asp-77, which acts as the Nucleophile. Residues 152-297 (GVPNYFGEQR…LEQERRPLLL (146 aa)) enclose the TRUD domain.

It belongs to the pseudouridine synthase TruD family.

The enzyme catalyses uridine(13) in tRNA = pseudouridine(13) in tRNA. Responsible for synthesis of pseudouridine from uracil-13 in transfer RNAs. This is tRNA pseudouridine synthase D from Shewanella oneidensis (strain ATCC 700550 / JCM 31522 / CIP 106686 / LMG 19005 / NCIMB 14063 / MR-1).